The following is a 412-amino-acid chain: MDDQLIDRSYFTTLYKQIRLQEFLEVAHTILQDRLENGFGKTVKGVPLGCLPVELFREHFSTFRYWRSYTKERPAFINNEKVMVQHLYFTFNARSGFPTLSSGKEWVKKKVEKKDSNNPADVAIHEYQKVTFIISIRDTRVECDFKMATNTPGSEQAQQQQQQQQQQQLGDIPIKQQITSSNNSGNSQQQQPQQQQQQQQQQQQQQQQPQQQQQQQQPQQQQHLQQQHQQQVQQLQQQQLQQQQLQQQQLQQQQLQQQQLQQPQLQQMQQPQQQQQQQQPQYTPQQLMQFQQMQQAQQQQQQAQQLQQQMGSSPTHSSPTIKQEGLTGYTQIPQGGIINTNTNLNGTGGVSPNQPMPNSSPILPTNASSVVPPVVSPPLPTSNNNSNNLGTTSPQQSNSSEISHQPIVPLNP.

Disordered regions lie at residues 150-171, 177-196, and 302-412; these read NTPG…QLGD, QITS…QQQQ, and QAQQ…PLNP. Over residues 156–168 the composition is skewed to low complexity; the sequence is QAQQQQQQQQQQQ. Polar residues-rich tracts occupy residues 177–187 and 310–321; these read QITSSNNSGNS and MGSSPTHSSPTI. The segment covering 335 to 345 has biased composition (low complexity); sequence GGIINTNTNLN. Residues 350 to 363 show a composition bias toward polar residues; it reads VSPNQPMPNSSPIL. 2 stretches are compositionally biased toward low complexity: residues 364-373 and 381-394; these read PTNASSVVPP and TSNN…TTSP.

This is an uncharacterized protein from Dictyostelium discoideum (Social amoeba).